Consider the following 457-residue polypeptide: Bifunctional protein GlmU (457 aa).

The tract at residues 1–232 is pyrophosphorylase; sequence MNNLAAVILA…PAEVMGINDR (232 aa). UDP-N-acetyl-alpha-D-glucosamine-binding positions include 9–12, lysine 23, glutamine 75, and 80–81; these read LAAG and GT. Aspartate 105 contacts Mg(2+). Glycine 142, glutamate 157, asparagine 172, and asparagine 230 together coordinate UDP-N-acetyl-alpha-D-glucosamine. Asparagine 230 serves as a coordination point for Mg(2+). The segment at 233–253 is linker; sequence AQLAEAGQLLRGRINKALMLD. Residues 254–457 are N-acetyltransferase; that stretch reads GTTLIDPQTT…NKEGWKLKKK (204 aa). Residues arginine 336 and lysine 354 each coordinate UDP-N-acetyl-alpha-D-glucosamine. Residue histidine 366 is the Proton acceptor of the active site. The UDP-N-acetyl-alpha-D-glucosamine site is built by tyrosine 369 and asparagine 380. Acetyl-CoA is bound by residues 389 to 390, serine 408, alanine 426, and arginine 443; that span reads NY.

The protein in the N-terminal section; belongs to the N-acetylglucosamine-1-phosphate uridyltransferase family. In the C-terminal section; belongs to the transferase hexapeptide repeat family. Homotrimer. Requires Mg(2+) as cofactor.

It is found in the cytoplasm. It catalyses the reaction alpha-D-glucosamine 1-phosphate + acetyl-CoA = N-acetyl-alpha-D-glucosamine 1-phosphate + CoA + H(+). It carries out the reaction N-acetyl-alpha-D-glucosamine 1-phosphate + UTP + H(+) = UDP-N-acetyl-alpha-D-glucosamine + diphosphate. Its pathway is nucleotide-sugar biosynthesis; UDP-N-acetyl-alpha-D-glucosamine biosynthesis; N-acetyl-alpha-D-glucosamine 1-phosphate from alpha-D-glucosamine 6-phosphate (route II): step 2/2. It functions in the pathway nucleotide-sugar biosynthesis; UDP-N-acetyl-alpha-D-glucosamine biosynthesis; UDP-N-acetyl-alpha-D-glucosamine from N-acetyl-alpha-D-glucosamine 1-phosphate: step 1/1. The protein operates within bacterial outer membrane biogenesis; LPS lipid A biosynthesis. Catalyzes the last two sequential reactions in the de novo biosynthetic pathway for UDP-N-acetylglucosamine (UDP-GlcNAc). The C-terminal domain catalyzes the transfer of acetyl group from acetyl coenzyme A to glucosamine-1-phosphate (GlcN-1-P) to produce N-acetylglucosamine-1-phosphate (GlcNAc-1-P), which is converted into UDP-GlcNAc by the transfer of uridine 5-monophosphate (from uridine 5-triphosphate), a reaction catalyzed by the N-terminal domain. The protein is Bifunctional protein GlmU of Geotalea uraniireducens (strain Rf4) (Geobacter uraniireducens).